Consider the following 121-residue polypeptide: Small ribosomal subunit protein uS11 (121 aa).

This sequence belongs to the universal ribosomal protein uS11 family. In terms of assembly, part of the 30S ribosomal subunit. Interacts with proteins S7 and S18. Binds to IF-3.

Functionally, located on the platform of the 30S subunit, it bridges several disparate RNA helices of the 16S rRNA. Forms part of the Shine-Dalgarno cleft in the 70S ribosome. The chain is Small ribosomal subunit protein uS11 from Mycoplasmoides gallisepticum (strain R(low / passage 15 / clone 2)) (Mycoplasma gallisepticum).